We begin with the raw amino-acid sequence, 136 residues long: Acidic phospholipase A2 CC-PLA2-2 (136 aa).

Residues 1–16 (MRTLWIVAVWLMGVEG) form the signal peptide. Cystine bridges form between Cys42–Cys129, Cys44–Cys60, Cys59–Cys109, Cys65–Cys136, Cys66–Cys102, Cys73–Cys95, and Cys90–Cys100. Ca(2+)-binding residues include Tyr43, Gly45, and Gly47. The active site involves His63. Asp64 contributes to the Ca(2+) binding site. Asp103 is an active-site residue.

The protein belongs to the phospholipase A2 family. Group II subfamily. D49 sub-subfamily. Ca(2+) serves as cofactor. Post-translationally, glycosylated (2.5%). In terms of tissue distribution, expressed by the venom gland.

It localises to the secreted. It catalyses the reaction a 1,2-diacyl-sn-glycero-3-phosphocholine + H2O = a 1-acyl-sn-glycero-3-phosphocholine + a fatty acid + H(+). In terms of biological role, snake venom phospholipase A2 that inhibits blood coagulation and platelet aggregation induced by ADP and arachidonic acid. Inhibits tumor cell adhesion and migration in a dose-dependent manner. Abolishes the attachment of human brain microvascular endothelial cells (HBMEC) to fibrinogen (IC(50)=0.2 uM) and dramatically reduces its adhesion to fibronectin (IC(50)=0.3 uM), whereas no effect is observed on type I collagen, vitronectin or laminin 1. Also blocks the cell migration toward fibronectin and fibrinogen. These effects are not dependent of the catalytic activity, but are mediated by alpha-5/beta-1 (ITGA5/ITGB1) and alpha-v-containing (ITGAV) integrins. Also shows anti-angiogenic activity in chicken chorioallantoix membrane assay. Has a relatively high enzymatic activity. PLA2 catalyzes the calcium-dependent hydrolysis of the 2-acyl groups in 3-sn-phosphoglycerides. The polypeptide is Acidic phospholipase A2 CC-PLA2-2 (Cerastes cerastes (Horned desert viper)).